A 166-amino-acid chain; its full sequence is Small ribosomal subunit protein uS5 (166 aa).

The region spanning 12–75 is the S5 DRBM domain; the sequence is YIEKLVQVNR…EAARRNMIQV (64 aa).

The protein belongs to the universal ribosomal protein uS5 family. Part of the 30S ribosomal subunit. Contacts proteins S4 and S8.

In terms of biological role, with S4 and S12 plays an important role in translational accuracy. Functionally, located at the back of the 30S subunit body where it stabilizes the conformation of the head with respect to the body. In Pseudomonas fluorescens (strain SBW25), this protein is Small ribosomal subunit protein uS5.